The primary structure comprises 508 residues: Photosystem II CP47 reaction center protein (508 aa).

Transmembrane regions (helical) follow at residues 21–36 (SVHI…WAGS), 101–115 (IVFS…IWHW), 140–156 (GIHL…FGAF), 203–218 (IAAG…FHLS), 237–252 (VLSS…AFVV), and 457–472 (SFAL…HGAR).

This sequence belongs to the PsbB/PsbC family. PsbB subfamily. In terms of assembly, PSII is composed of 1 copy each of membrane proteins PsbA, PsbB, PsbC, PsbD, PsbE, PsbF, PsbH, PsbI, PsbJ, PsbK, PsbL, PsbM, PsbT, PsbX, PsbY, PsbZ, Psb30/Ycf12, at least 3 peripheral proteins of the oxygen-evolving complex and a large number of cofactors. It forms dimeric complexes. It depends on Binds multiple chlorophylls. PSII binds additional chlorophylls, carotenoids and specific lipids. as a cofactor.

Its subcellular location is the plastid. It localises to the chloroplast thylakoid membrane. Functionally, one of the components of the core complex of photosystem II (PSII). It binds chlorophyll and helps catalyze the primary light-induced photochemical processes of PSII. PSII is a light-driven water:plastoquinone oxidoreductase, using light energy to abstract electrons from H(2)O, generating O(2) and a proton gradient subsequently used for ATP formation. This is Photosystem II CP47 reaction center protein from Carica papaya (Papaya).